Consider the following 333-residue polypeptide: D-glutamate N-acetyltransferase (333 aa).

Belongs to the N-acetyltransferase DgcN family.

The catalysed reaction is D-glutamate + acetyl-CoA = N-acetyl-D-glutamate + CoA + H(+). Its pathway is amino-acid degradation. Its function is as follows. N-acetyltransferase involved in a deamination-independent D-glutamate degradation pathway, named the DgcN-DgcA pathway. Catalyzes the transfer of the acetyl moiety from acetyl-CoA to D-glutamate to generate N-acetyl-D-glutamate. This chain is D-glutamate N-acetyltransferase, found in Tritonibacter scottomollicae (Epibacterium scottomollicae).